The sequence spans 283 residues: Methyltransferase cpsF (283 aa).

Belongs to the methyltransferase superfamily. LaeA methyltransferase family.

It carries out the reaction campesine A + S-adenosyl-L-methionine = campesine B + S-adenosyl-L-homocysteine + H(+). It participates in alkaloid biosynthesis. Its function is as follows. Methyltransferase; part of the gene cluster that mediates the biosynthesis of campesine G, a dimeric indole piperazine alkaloid that shows good insecticidal activity Galleria mellonella. Within the pathway, cpsF methylates campesine A at N13 of piperazine ring to produce campesine B. The non-canonical non-ribosomal peptide synthetase cpsA catalyzes the first steps of the pathway by producing L-tryptophanal and L-valinal from their respective amino-acids. These products condensate spontaneously to form trypyl-valyl pyrazine also known as didehydrocampesine A. The NmrA-like family domain-containing oxidoreductase cpsB is the next enzyme in cps pathway and reduces the unstable didehydrocampesine A to campesine A. The methyltransferase cpsF and the acetyltransferase cpsE both recognize N13 of piperazine ring to carry out methylation and acetylation of campesine A to produce campesine C and B, respectively. The cytochrome P450 monooxygenase cpsD then acts as a dimerase that catalyzes oxidative heterocoupling between campesine B and C to produce heterodimers with unexpected 6/5/6/6/6/6/5/6 eight-ring scaffold called campesine D. Finally,the cytochrome P450 monooxygenase cpsC is a regioselective dehydrogenase that catalyzes dehydrogenation reaction towards C2-N1 to produce campesine G. The sequence is that of Methyltransferase cpsF from Aspergillus campestris (strain IBT 28561).